The chain runs to 109 residues: Small ribosomal subunit protein uS17A (109 aa).

The protein belongs to the universal ribosomal protein uS17 family. Part of the 30S ribosomal subunit.

One of the primary rRNA binding proteins, it binds specifically to the 5'-end of 16S ribosomal RNA. This is Small ribosomal subunit protein uS17A from Methanosarcina acetivorans (strain ATCC 35395 / DSM 2834 / JCM 12185 / C2A).